The sequence spans 108 residues: Phosphoribosyl-AMP cyclohydrolase (108 aa).

Asp-73 is a binding site for Mg(2+). Zn(2+) is bound at residue Cys-74. Asp-75 and Asp-77 together coordinate Mg(2+). Residues Cys-90 and Cys-97 each contribute to the Zn(2+) site.

It belongs to the PRA-CH family. In terms of assembly, homodimer. The cofactor is Mg(2+). It depends on Zn(2+) as a cofactor.

The protein resides in the cytoplasm. It catalyses the reaction 1-(5-phospho-beta-D-ribosyl)-5'-AMP + H2O = 1-(5-phospho-beta-D-ribosyl)-5-[(5-phospho-beta-D-ribosylamino)methylideneamino]imidazole-4-carboxamide. It functions in the pathway amino-acid biosynthesis; L-histidine biosynthesis; L-histidine from 5-phospho-alpha-D-ribose 1-diphosphate: step 3/9. Catalyzes the hydrolysis of the adenine ring of phosphoribosyl-AMP. This is Phosphoribosyl-AMP cyclohydrolase from Lactiplantibacillus plantarum (strain ATCC BAA-793 / NCIMB 8826 / WCFS1) (Lactobacillus plantarum).